Here is a 413-residue protein sequence, read N- to C-terminus: Multidrug resistance protein MdtA (413 aa).

Positions 1 to 20 (MKGSNTFRWAIAIGVVVAAA) are cleaved as a signal peptide. 2 disordered regions span residues 31–57 (SPTA…RDGP) and 391–413 (EPQT…GARA). The segment covering 397-413 (ADEKSPSRHEGQKGARA) has biased composition (basic and acidic residues).

Belongs to the membrane fusion protein (MFP) (TC 8.A.1) family. In terms of assembly, part of a tripartite efflux system composed of MdtA, MdtB and MdtC.

It localises to the cell inner membrane. This is Multidrug resistance protein MdtA from Salmonella paratyphi C (strain RKS4594).